Consider the following 111-residue polypeptide: Nucleoid-associated protein PputW619_3586 (111 aa).

The segment at 87-111 (EQSSQEKMGGMTAGMQLPPGFKMPF) is disordered.

This sequence belongs to the YbaB/EbfC family. In terms of assembly, homodimer.

The protein localises to the cytoplasm. Its subcellular location is the nucleoid. Functionally, binds to DNA and alters its conformation. May be involved in regulation of gene expression, nucleoid organization and DNA protection. This chain is Nucleoid-associated protein PputW619_3586, found in Pseudomonas putida (strain W619).